The sequence spans 310 residues: Nuclear hormone receptor family member nhr-89 (310 aa).

The segment at residues 5 to 79 (EGPCRVCHSV…SGMRRDCVRK (75 aa)) is a DNA-binding region (nuclear receptor). NR C4-type zinc fingers lie at residues 8-29 (CRVC…CMSC) and 43-67 (CPAN…YNKC). The NR LBD domain occupies 101-310 (KLSESYEELL…TLHQKYQIPF (210 aa)).

This sequence belongs to the nuclear hormone receptor family.

It localises to the nucleus. Functionally, orphan nuclear receptor. In Caenorhabditis elegans, this protein is Nuclear hormone receptor family member nhr-89 (nhr-89).